Consider the following 20-residue polypeptide: LKCNKLVPLFYKTCPAGKNL.

Belongs to the three-finger toxin family. Short-chain subfamily. Type IA cytotoxin sub-subfamily. In terms of assembly, monomer in solution; Homodimer and oligomer in the presence of negatively charged lipids forming a pore with a size ranging between 20 and 30 Angstroms. Expressed by the venom gland.

It localises to the secreted. The protein localises to the target cell membrane. In terms of biological role, this three-finger cytotoxin has antiproliferative, cytotoxic and apoptotic activities. Both in vivo and in vitro experimental results suggests that this protein possess anticancer potential. Also shows neurotoxicity, cardiotoxicity and myotoxicity. This chain is Cytotoxin drCT-1, found in Daboia russelii (Russel's viper).